Consider the following 348-residue polypeptide: Holliday junction branch migration complex subunit RuvB (348 aa).

Residues methionine 1 to arginine 10 are compositionally biased toward low complexity. The interval methionine 1–leucine 37 is disordered. The interval proline 13–tyrosine 198 is large ATPase domain (RuvB-L). ATP contacts are provided by leucine 37, arginine 38, glycine 79, lysine 82, threonine 83, threonine 84, arginine 188, tyrosine 198, and arginine 235. Threonine 83 is a binding site for Mg(2+). The segment at glycine 199–arginine 271 is small ATPAse domain (RuvB-S). A head domain (RuvB-H) region spans residues histidine 274 to alanine 348. 2 residues coordinate DNA: arginine 329 and arginine 334.

Belongs to the RuvB family. As to quaternary structure, homohexamer. Forms an RuvA(8)-RuvB(12)-Holliday junction (HJ) complex. HJ DNA is sandwiched between 2 RuvA tetramers; dsDNA enters through RuvA and exits via RuvB. An RuvB hexamer assembles on each DNA strand where it exits the tetramer. Each RuvB hexamer is contacted by two RuvA subunits (via domain III) on 2 adjacent RuvB subunits; this complex drives branch migration. In the full resolvosome a probable DNA-RuvA(4)-RuvB(12)-RuvC(2) complex forms which resolves the HJ.

The protein resides in the cytoplasm. The enzyme catalyses ATP + H2O = ADP + phosphate + H(+). The RuvA-RuvB-RuvC complex processes Holliday junction (HJ) DNA during genetic recombination and DNA repair, while the RuvA-RuvB complex plays an important role in the rescue of blocked DNA replication forks via replication fork reversal (RFR). RuvA specifically binds to HJ cruciform DNA, conferring on it an open structure. The RuvB hexamer acts as an ATP-dependent pump, pulling dsDNA into and through the RuvAB complex. RuvB forms 2 homohexamers on either side of HJ DNA bound by 1 or 2 RuvA tetramers; 4 subunits per hexamer contact DNA at a time. Coordinated motions by a converter formed by DNA-disengaged RuvB subunits stimulates ATP hydrolysis and nucleotide exchange. Immobilization of the converter enables RuvB to convert the ATP-contained energy into a lever motion, pulling 2 nucleotides of DNA out of the RuvA tetramer per ATP hydrolyzed, thus driving DNA branch migration. The RuvB motors rotate together with the DNA substrate, which together with the progressing nucleotide cycle form the mechanistic basis for DNA recombination by continuous HJ branch migration. Branch migration allows RuvC to scan DNA until it finds its consensus sequence, where it cleaves and resolves cruciform DNA. In Synechococcus sp. (strain CC9605), this protein is Holliday junction branch migration complex subunit RuvB.